The chain runs to 363 residues: MKKKFRIAVLPGDGIGPEIMREAYKILNILEKNFSLPLEIREFSVGGIAIDREGIALPEETLRGCENSDAILFGSVGGKKWDYLPIESRPERASLLPLRKHFNLFSNLRPAKLYSDLKNLSPLRSNIVRNGFDILCVRELTGGIYFGKPKGRSKNENGEYSFDTEIYYDFEIKRIAHLAFELASSRRCKVCSIDKSNVLASSILWREIVEEVSKNYPNIILSHLYIDNACMQIIKNPSQFDVLLCSNIFGDIISDECAMITGSIGMLPSASLNSKKFGLYEPAGGSAPDIEGKNIANPIAQILSLSMLIRHSMNLNEIADKIDSSVYRALKAGYRTLDISDGKNYIKTNEMGDIIAKFLINGK.

NAD(+) is bound at residue 78–91 (GKKWDYLPIESRPE). The substrate site is built by arginine 99, arginine 109, arginine 138, and aspartate 227. The Mg(2+) site is built by aspartate 227, aspartate 251, and aspartate 255. Residue 285 to 297 (GSAPDIEGKNIAN) coordinates NAD(+).

This sequence belongs to the isocitrate and isopropylmalate dehydrogenases family. LeuB type 1 subfamily. As to quaternary structure, homodimer. Mg(2+) serves as cofactor. The cofactor is Mn(2+).

The protein resides in the cytoplasm. The catalysed reaction is (2R,3S)-3-isopropylmalate + NAD(+) = 4-methyl-2-oxopentanoate + CO2 + NADH. The protein operates within amino-acid biosynthesis; L-leucine biosynthesis; L-leucine from 3-methyl-2-oxobutanoate: step 3/4. Its function is as follows. Catalyzes the oxidation of 3-carboxy-2-hydroxy-4-methylpentanoate (3-isopropylmalate) to 3-carboxy-4-methyl-2-oxopentanoate. The product decarboxylates to 4-methyl-2 oxopentanoate. The chain is 3-isopropylmalate dehydrogenase (leuB) from Buchnera aphidicola subsp. Rhopalosiphum padi.